The following is a 140-amino-acid chain: Nucleoside diphosphate kinase (140 aa).

The ATP site is built by K11, F59, R87, T93, R104, and N114. H117 functions as the Pros-phosphohistidine intermediate in the catalytic mechanism.

The protein belongs to the NDK family. As to quaternary structure, homotetramer. Mg(2+) is required as a cofactor.

The protein resides in the cytoplasm. The catalysed reaction is a 2'-deoxyribonucleoside 5'-diphosphate + ATP = a 2'-deoxyribonucleoside 5'-triphosphate + ADP. It carries out the reaction a ribonucleoside 5'-diphosphate + ATP = a ribonucleoside 5'-triphosphate + ADP. Major role in the synthesis of nucleoside triphosphates other than ATP. The ATP gamma phosphate is transferred to the NDP beta phosphate via a ping-pong mechanism, using a phosphorylated active-site intermediate. The polypeptide is Nucleoside diphosphate kinase (Bradyrhizobium diazoefficiens (strain JCM 10833 / BCRC 13528 / IAM 13628 / NBRC 14792 / USDA 110)).